The primary structure comprises 85 residues: Conotoxin Cap15b (85 aa).

An N-terminal signal peptide occupies residues 1–23; that stretch reads MEKLTFLILVATVLLTIHVLVQS. Residues 24-49 constitute a propeptide that is removed on maturation; the sequence is DGDKHLKRRPKQYATKRLSALMRGHR. Q50 is modified (pyrrolidone carboxylic acid).

Belongs to the conotoxin O2 superfamily. In terms of processing, contains 4 disulfide bonds. As to expression, expressed by the venom duct.

It localises to the secreted. This Conus capitaneus (Captain cone) protein is Conotoxin Cap15b.